The sequence spans 312 residues: Transcription initiation factor IIB-2 (312 aa).

Residues 2–34 (SDAFCSDCKRHTEVVFDHSAGDTVCSECGLVLE) form a TFIIB-type zinc finger. Zn(2+) contacts are provided by cysteine 6, cysteine 9, cysteine 26, and cysteine 29. 2 repeat units span residues 115–192 (MADR…YIVK) and 216–290 (FCSN…DLYP).

This sequence belongs to the TFIIB family. As to quaternary structure, associates with TFIID-IIA (DA complex) to form TFIID-IIA-IIB (DAB-complex) which is then recognized by polymerase II.

The protein resides in the nucleus. Its function is as follows. General factor that plays a major role in the activation of eukaryotic genes transcribed by RNA polymerase II. This chain is Transcription initiation factor IIB-2 (TFIIB2), found in Arabidopsis thaliana (Mouse-ear cress).